The chain runs to 374 residues: Queuine tRNA-ribosyltransferase (374 aa).

Aspartate 91 (proton acceptor) is an active-site residue. Substrate-binding positions include 91–95, aspartate 145, glutamine 189, and glycine 216; that span reads DSGGY. Residues 247-253 form an RNA binding region; it reads GVGTVPD. The active-site Nucleophile is the aspartate 266. The RNA binding; important for wobble base 34 recognition stretch occupies residues 271-275; sequence TRNAR. 4 residues coordinate Zn(2+): cysteine 304, cysteine 306, cysteine 309, and histidine 335.

This sequence belongs to the queuine tRNA-ribosyltransferase family. As to quaternary structure, homodimer. Within each dimer, one monomer is responsible for RNA recognition and catalysis, while the other monomer binds to the replacement base PreQ1. Requires Zn(2+) as cofactor.

The enzyme catalyses 7-aminomethyl-7-carbaguanine + guanosine(34) in tRNA = 7-aminomethyl-7-carbaguanosine(34) in tRNA + guanine. The protein operates within tRNA modification; tRNA-queuosine biosynthesis. Functionally, catalyzes the base-exchange of a guanine (G) residue with the queuine precursor 7-aminomethyl-7-deazaguanine (PreQ1) at position 34 (anticodon wobble position) in tRNAs with GU(N) anticodons (tRNA-Asp, -Asn, -His and -Tyr). Catalysis occurs through a double-displacement mechanism. The nucleophile active site attacks the C1' of nucleotide 34 to detach the guanine base from the RNA, forming a covalent enzyme-RNA intermediate. The proton acceptor active site deprotonates the incoming PreQ1, allowing a nucleophilic attack on the C1' of the ribose to form the product. After dissociation, two additional enzymatic reactions on the tRNA convert PreQ1 to queuine (Q), resulting in the hypermodified nucleoside queuosine (7-(((4,5-cis-dihydroxy-2-cyclopenten-1-yl)amino)methyl)-7-deazaguanosine). This is Queuine tRNA-ribosyltransferase from Leptospira borgpetersenii serovar Hardjo-bovis (strain JB197).